A 47-amino-acid chain; its full sequence is Light-harvesting protein B800/850/890 alpha-2 chain (47 aa).

The Cytoplasmic segment spans residues 1 to 12; sequence MWRMWKILDYRR. A helical membrane pass occupies residues 13–33; that stretch reads TVVLAHVGMAVLALLIHFILL. An a bacteriochlorophyll-binding site is contributed by H29. The Periplasmic segment spans residues 34–47; it reads STESFNWLEGNPYG.

It belongs to the antenna complex alpha subunit family. In terms of assembly, the core complex is formed by different alpha and beta chains, binding bacteriochlorophyll molecules, and arranged most probably in tetrameric structures disposed around the reaction center. The non-pigmented gamma chains may constitute additional components.

The protein localises to the cell inner membrane. In terms of biological role, antenna complexes are light-harvesting systems, which transfer the excitation energy to the reaction centers. The polypeptide is Light-harvesting protein B800/850/890 alpha-2 chain (Halorhodospira halophila (strain DSM 244 / SL1) (Ectothiorhodospira halophila (strain DSM 244 / SL1))).